The sequence spans 201 residues: Large ribosomal subunit protein bL25 (201 aa).

It belongs to the bacterial ribosomal protein bL25 family. CTC subfamily. Part of the 50S ribosomal subunit; part of the 5S rRNA/L5/L18/L25 subcomplex. Contacts the 5S rRNA. Binds to the 5S rRNA independently of L5 and L18.

In terms of biological role, this is one of the proteins that binds to the 5S RNA in the ribosome where it forms part of the central protuberance. In Akkermansia muciniphila (strain ATCC BAA-835 / DSM 22959 / JCM 33894 / BCRC 81048 / CCUG 64013 / CIP 107961 / Muc), this protein is Large ribosomal subunit protein bL25.